The sequence spans 940 residues: Translation initiation factor IF-2 (940 aa).

Disordered stretches follow at residues 48–264 (ESFG…VESK) and 278–351 (QVAE…TERK). Composition is skewed to basic and acidic residues over residues 65 to 95 (SKPE…KEEV), 112 to 125 (FKAE…EQAA), 155 to 206 (NNER…REAA), 232 to 258 (RTSE…KFEE), and 292 to 301 (ARPDKKRDFN). Residues 314–332 (NRNSQNQVRNQRTSNWNNN) show a composition bias toward low complexity. Residues 442 to 609 (ERPPVVTIMG…TVLLVAEIQE (168 aa)) form the tr-type G domain. Residues 451–458 (GHVDHGKT) are G1. A GTP-binding site is contributed by 451-458 (GHVDHGKT). The tract at residues 476 to 480 (GITQH) is G2. Residues 497 to 500 (DTPG) form a G3 region. GTP-binding positions include 497–501 (DTPGH) and 551–554 (NKID). The segment at 551–554 (NKID) is G4. The interval 587 to 589 (SAK) is G5.

The protein belongs to the TRAFAC class translation factor GTPase superfamily. Classic translation factor GTPase family. IF-2 subfamily.

It is found in the cytoplasm. In terms of biological role, one of the essential components for the initiation of protein synthesis. Protects formylmethionyl-tRNA from spontaneous hydrolysis and promotes its binding to the 30S ribosomal subunits. Also involved in the hydrolysis of GTP during the formation of the 70S ribosomal complex. The chain is Translation initiation factor IF-2 from Streptococcus suis (strain 98HAH33).